Consider the following 498-residue polypeptide: Cytochrome P450 monooxygenase aflU (498 aa).

A helical membrane pass occupies residues 5–27 (TVYTSLIGLLVALTVRSIYRVYF). Residues N259 and N354 are each glycosylated (N-linked (GlcNAc...) asparagine). C438 is a heme binding site.

This sequence belongs to the cytochrome P450 family. Heme is required as a cofactor.

It localises to the membrane. It participates in mycotoxin biosynthesis; aflatoxin biosynthesis. In terms of biological role, cytochrome P450 monooxygenase; part of the gene cluster that mediates the biosynthesis of aflatoxins, a group of polyketide-derived furanocoumarins, and part of the most toxic and carcinogenic compounds among the known mycotoxins. The four major aflatoxins produced by A.parasiticus are aflatoxin B1 (AFB1), aflatoxin B2 (AFB2), aflatoxin G1 (AFG1) and aflatoxin G2 (AFG2). Within the aflatoxin pathway, the cytochrome P450 monooxygenase aflU is involved in the last steps in which OMST is converted to aflatoxins B1 and G1, and DHOMST to aflatoxins B2 and G2. The biosynthesis of aflatoxins begins with the norsolorinic acid synthase aflC that combines a hexanoyl starter unit produced by the fatty acid synthase aflA/aflB and 7 malonyl-CoA extender units to synthesize the precursor NOR. The second step is the conversion of NOR to averantin and requires the norsolorinic acid ketoreductase aflD, which catalyzes the dehydration of norsolorinic acid to form (1'S)-averantin. The norsolorinic acid reductases aflE and aflF may also play a role in the conversion of NOR to AVN. The cytochrome P450 monooxygenase aflG then catalyzes the hydroxylation of AVN to 5'hydroxyaverantin (HAVN). The next step is performed by the 5'-hydroxyaverantin dehydrogenase aflH that transforms HAVN to 5'-oxoaverantin (OAVN) which is further converted to averufin (AVF) by aflK that plays a dual role in the pathway, as a 5'-oxoaverantin cyclase that mediates conversion of 5'-oxoaverantin, as well as a versicolorin B synthase in a later step in the pathway. The averufin oxidase aflI catalyzes the conversion of AVF to versiconal hemiacetal acetate (VHA). VHA is then the substrate for the versiconal hemiacetal acetate esterase aflJ to yield versiconal (VAL). Versicolorin B synthase aflK then converts VAL to versicolorin B (VERB) by closing the bisfuran ring of aflatoxin which is required for DNA-binding, thus giving to aflatoxin its activity as a mutagen. Then, the activity of the versicolorin B desaturase aflL leads to versicolorin A (VERA). A branch point starts from VERB since it can also be converted to dihydrodemethylsterigmatocystin (DMDHST), probably also by aflL, VERA being a precursor for aflatoxins B1 and G1, and DMDHST for aflatoxins B2 and G2. Next, the versicolorin reductase aflM and the cytochrome P450 monooxygenase aflN are involved in conversion of VERA to demethylsterigmatocystin (DMST). AflX and aflY seem also involved in this step, through probable aflX-mediated epoxide ring-opening step following versicolorin A oxidation and aflY-mediated Baeyer-Villiger oxidation required for the formation of the xanthone ring. The methyltransferase aflO then leads to the modification of DMST to sterigmatocystin (ST), and of DMDHST to dihydrosterigmatocystin (DHST). Both ST and DHST are then substrates of the O-methyltransferase aflP to yield O-methylsterigmatocystin (OMST) and dihydro-O-methylsterigmatocystin (DHOMST), respectively. Finally OMST is converted to aflatoxins B1 and G1, and DHOMST to aflatoxins B2 and G2, via the action of several enzymes including O-methylsterigmatocystin oxidoreductase aflQ, the cytochrome P450 monooxygenase aflU, but also the NADH-dependent flavin oxidoreductase nadA which is specifically required for the synthesis of AFG1. The sequence is that of Cytochrome P450 monooxygenase aflU from Aspergillus parasiticus (strain ATCC 56775 / NRRL 5862 / SRRC 143 / SU-1).